The following is a 232-amino-acid chain: dITP/XTP pyrophosphatase (232 aa).

A substrate-binding site is contributed by 10-15 (TRNKGK). D72 functions as the Proton acceptor in the catalytic mechanism. D72 is a Mg(2+) binding site. Substrate-binding positions include S73, 153 to 156 (FGYD), K176, and 181 to 182 (HR).

Belongs to the HAM1 NTPase family. Homodimer. Requires Mg(2+) as cofactor.

It carries out the reaction XTP + H2O = XMP + diphosphate + H(+). The enzyme catalyses dITP + H2O = dIMP + diphosphate + H(+). The catalysed reaction is ITP + H2O = IMP + diphosphate + H(+). In terms of biological role, pyrophosphatase that catalyzes the hydrolysis of nucleoside triphosphates to their monophosphate derivatives, with a high preference for the non-canonical purine nucleotides XTP (xanthosine triphosphate), dITP (deoxyinosine triphosphate) and ITP. Seems to function as a house-cleaning enzyme that removes non-canonical purine nucleotides from the nucleotide pool, thus preventing their incorporation into DNA/RNA and avoiding chromosomal lesions. This chain is dITP/XTP pyrophosphatase, found in Syntrophobacter fumaroxidans (strain DSM 10017 / MPOB).